We begin with the raw amino-acid sequence, 166 residues long: MTSKSPKFRIGNGYDIHRLEIGRKLIIGGVKLNHPDNLGLDGHSDADVLSHSIMDALLGALSLGDIGKYFPPSDEKWKDVDSLILLSKVIDLVRKQGWEINNIDSVIVAERPKIKPYVEIMKRNLSKTLKIDDSFIGIKATTNEKLGPEGREEGISCHSVVLLEKK.

A divalent metal cation-binding residues include D15 and H17. Residues 15–17 (DIH) and 43–44 (HS) contribute to the 4-CDP-2-C-methyl-D-erythritol 2-phosphate site. Position 51 (H51) interacts with a divalent metal cation. Residues 65 to 67 (DIG), 141 to 144 (TTNE), and R151 contribute to the 4-CDP-2-C-methyl-D-erythritol 2-phosphate site.

This sequence belongs to the IspF family. Homotrimer. A divalent metal cation is required as a cofactor.

The catalysed reaction is 4-CDP-2-C-methyl-D-erythritol 2-phosphate = 2-C-methyl-D-erythritol 2,4-cyclic diphosphate + CMP. It functions in the pathway isoprenoid biosynthesis; isopentenyl diphosphate biosynthesis via DXP pathway; isopentenyl diphosphate from 1-deoxy-D-xylulose 5-phosphate: step 4/6. Functionally, involved in the biosynthesis of isopentenyl diphosphate (IPP) and dimethylallyl diphosphate (DMAPP), two major building blocks of isoprenoid compounds. Catalyzes the conversion of 4-diphosphocytidyl-2-C-methyl-D-erythritol 2-phosphate (CDP-ME2P) to 2-C-methyl-D-erythritol 2,4-cyclodiphosphate (ME-CPP) with a corresponding release of cytidine 5-monophosphate (CMP). This Prochlorococcus marinus (strain MIT 9215) protein is 2-C-methyl-D-erythritol 2,4-cyclodiphosphate synthase.